A 52-amino-acid chain; its full sequence is UPF0391 membrane protein ABAYE0050 (52 aa).

Transmembrane regions (helical) follow at residues 6–26 (IIFA…VAGL) and 30–50 (FAVI…ISRG).

It belongs to the UPF0391 family.

It localises to the cell membrane. This chain is UPF0391 membrane protein ABAYE0050, found in Acinetobacter baumannii (strain AYE).